Consider the following 78-residue polypeptide: Small ribosomal subunit protein bS18 (78 aa).

The protein belongs to the bacterial ribosomal protein bS18 family. In terms of assembly, part of the 30S ribosomal subunit. Forms a tight heterodimer with protein bS6.

In terms of biological role, binds as a heterodimer with protein bS6 to the central domain of the 16S rRNA, where it helps stabilize the platform of the 30S subunit. This is Small ribosomal subunit protein bS18 from Lactobacillus delbrueckii subsp. bulgaricus (strain ATCC BAA-365 / Lb-18).